A 332-amino-acid chain; its full sequence is Super small secreted glycoprotein (332 aa).

The signal sequence occupies residues methionine 1–serine 33. The N-linked (GlcNAc...) asparagine; by host glycan is linked to asparagine 41. Disulfide bonds link cysteine 109/cysteine 136 and cysteine 122/cysteine 148. N-linked (GlcNAc...) asparagine; by host glycans are attached at residues asparagine 205, asparagine 239, asparagine 258, and asparagine 269.

It belongs to the filoviruses glycoprotein family.

Its subcellular location is the secreted. This chain is Super small secreted glycoprotein (GP), found in Homo sapiens (Human).